A 552-amino-acid chain; its full sequence is Macrophage colony-stimulating factor 1 (552 aa).

An N-terminal signal peptide occupies residues 1–32 (MTARGAAGRCPSSTWLGSRLLLVCLLMSRSIA). Topologically, residues 33-492 (KEVSEHCSHM…EGSSDPQIPE (460 aa)) are extracellular. 3 disulfides stabilise this stretch: Cys-39/Cys-122, Cys-80/Cys-171, and Cys-134/Cys-178. N-linked (GlcNAc...) asparagine glycosylation is found at Asn-107, Asn-154, and Asn-172. Residues 197–207 (TPSSDPASASP) show a composition bias toward low complexity. A disordered region spans residues 197–293 (TPSSDPASAS…GGPVPGVEDI (97 aa)). The segment covering 254–267 (PRSTCQTLESTEQP) has biased composition (polar residues). A compositionally biased stretch (basic and acidic residues) spans 268–278 (NHGDRLTEDSQ). A glycan (O-linked (Xyl...) (chondroitin sulfate) serine) is linked at Ser-308. 2 disordered regions span residues 321–412 (KFSP…RVSN) and 439–465 (GKRS…ARPV). Composition is skewed to basic and acidic residues over residues 350–364 (STED…DRPL), 382–396 (EKTD…DHQE), and 439–450 (GKRSTRDRRSPA). Residue Thr-360 is glycosylated (O-linked (GalNAc...) threonine). A helical transmembrane segment spans residues 493 to 515 (SVFHLLVPGIILVLLTVGGLLFY). Topologically, residues 516-552 (KWKWRSHRDPQTLDSSVGRPEDSSLTQDEDRQVELPV) are cytoplasmic. The tract at residues 525–552 (PQTLDSSVGRPEDSSLTQDEDRQVELPV) is disordered. The span at 543-552 (DEDRQVELPV) shows a compositional bias: basic and acidic residues.

As to quaternary structure, homodimer or heterodimer; disulfide-linked. Likely to exist in multiple forms: homodimer consisting of 2 identical 150-200 kDa proteoglycan subunits, heterodimer consisting of a 150-200 kDa proteoglycan subunit and a truncated 43 kDa subunit, and homodimer consisting of 2 identical 43 kDa subunits. Interacts with CSF1R. Post-translationally, N-glycosylated. In terms of processing, O-glycosylated; contains chondroitin sulfate.

The protein localises to the cell membrane. The protein resides in the secreted. It is found in the extracellular space. In terms of biological role, cytokine that plays an essential role in the regulation of survival, proliferation and differentiation of hematopoietic precursor cells, especially mononuclear phagocytes, such as macrophages and monocytes. Promotes the release of pro-inflammatory chemokines, and thereby plays an important role in innate immunity and in inflammatory processes. Plays an important role in the regulation of osteoclast proliferation and differentiation, the regulation of bone resorption, and is required for normal bone development. Required for normal male and female fertility. Promotes reorganization of the actin cytoskeleton, regulates formation of membrane ruffles, cell adhesion and cell migration. Plays a role in lipoprotein clearance. This is Macrophage colony-stimulating factor 1 (Csf1) from Mus musculus (Mouse).